We begin with the raw amino-acid sequence, 347 residues long: MSTLLIDLKGQELLAEEAELLAHPLVAGLILFTRNFYDRSQIQALIKDIRRRVKKPLLITVDQEGGRVQRFREGFTQLPAMQSFAAMISDPALQLTTAKEAGWLMAAEMTALDIDLSFAPVLDLGHECKAIGDRSFCEEVEPAVRLASAFIDGMHQAGMATTGKHFPGHGHVLADSHLETPYDERPSAVIFERDIQPFQQLIAQNKLDAVMPAHVIYRHCDSQPASGSKYWLQDILRQKLGFDGTVFSDDLGMKGAGFMGDFVARSEKALSAGCDLLLLCNEPEGVVQVLDNLKLEENPPHFAARQRRLQSLFKKKAFSWNELTKTRRWLENSKKLTALQQSWLDSK.

Substrate-binding positions include aspartate 62, arginine 70, arginine 134, and 164-165 (KH). Catalysis depends on histidine 177, which acts as the Proton donor/acceptor. The active-site Nucleophile is aspartate 249.

It belongs to the glycosyl hydrolase 3 family. NagZ subfamily.

The protein localises to the cytoplasm. The catalysed reaction is Hydrolysis of terminal non-reducing N-acetyl-D-hexosamine residues in N-acetyl-beta-D-hexosaminides.. It functions in the pathway cell wall biogenesis; peptidoglycan recycling. Its function is as follows. Plays a role in peptidoglycan recycling by cleaving the terminal beta-1,4-linked N-acetylglucosamine (GlcNAc) from peptide-linked peptidoglycan fragments, giving rise to free GlcNAc, anhydro-N-acetylmuramic acid and anhydro-N-acetylmuramic acid-linked peptides. The sequence is that of Beta-hexosaminidase from Mannheimia succiniciproducens (strain KCTC 0769BP / MBEL55E).